Reading from the N-terminus, the 848-residue chain is Translation initiation factor IF-2 (848 aa).

Basic and acidic residues predominate over residues 1–10 (MSENNNDKIT). Disordered stretches follow at residues 1–79 (MSEN…EKPV) and 121–163 (AERQ…LFSS). Over residues 17–33 (LKRSGSETNTVKQNFNH) the composition is skewed to polar residues. The span at 121–138 (AERQAAEKQAKESEEGLH) shows a compositional bias: basic and acidic residues. Residues 149–163 (KSSSNTTKPTPLFSS) are compositionally biased toward polar residues. Residues 346–513 (TRPPIVTIMG…AILLQAEILD (168 aa)) enclose the tr-type G domain. The tract at residues 355–362 (GHVDHGKT) is G1. 355–362 (GHVDHGKT) contributes to the GTP binding site. The interval 380 to 384 (GITQH) is G2. A G3 region spans residues 401–404 (DTPG). Residues 401–405 (DTPGH) and 455–458 (NKID) each bind GTP. Residues 455–458 (NKID) are G4. The tract at residues 491–493 (SAK) is G5.

It belongs to the TRAFAC class translation factor GTPase superfamily. Classic translation factor GTPase family. IF-2 subfamily.

The protein localises to the cytoplasm. One of the essential components for the initiation of protein synthesis. Protects formylmethionyl-tRNA from spontaneous hydrolysis and promotes its binding to the 30S ribosomal subunits. Also involved in the hydrolysis of GTP during the formation of the 70S ribosomal complex. The sequence is that of Translation initiation factor IF-2 from Bartonella bacilliformis (strain ATCC 35685 / KC583 / Herrer 020/F12,63).